The following is a 338-amino-acid chain: Holliday junction branch migration complex subunit RuvB (338 aa).

The large ATPase domain (RuvB-L) stretch occupies residues 4 to 185; that stretch reads EDQKILDAKP…FGIVAHMQFY (182 aa). Residues L24, R25, G66, K69, T70, T71, 132–134, R175, Y185, and R222 contribute to the ATP site; that span reads EDF. Position 70 (T70) interacts with Mg(2+). A small ATPAse domain (RuvB-S) region spans residues 186–256; that stretch reads PVSDLKLIAK…IVDNALNKLH (71 aa). The segment at 259–338 is head domain (RuvB-H); sequence ARGLDETDLK…LQIPYQTGLS (80 aa). DNA contacts are provided by R314 and R319.

This sequence belongs to the RuvB family. Homohexamer. Forms an RuvA(8)-RuvB(12)-Holliday junction (HJ) complex. HJ DNA is sandwiched between 2 RuvA tetramers; dsDNA enters through RuvA and exits via RuvB. An RuvB hexamer assembles on each DNA strand where it exits the tetramer. Each RuvB hexamer is contacted by two RuvA subunits (via domain III) on 2 adjacent RuvB subunits; this complex drives branch migration. In the full resolvosome a probable DNA-RuvA(4)-RuvB(12)-RuvC(2) complex forms which resolves the HJ.

The protein localises to the cytoplasm. It carries out the reaction ATP + H2O = ADP + phosphate + H(+). The RuvA-RuvB-RuvC complex processes Holliday junction (HJ) DNA during genetic recombination and DNA repair, while the RuvA-RuvB complex plays an important role in the rescue of blocked DNA replication forks via replication fork reversal (RFR). RuvA specifically binds to HJ cruciform DNA, conferring on it an open structure. The RuvB hexamer acts as an ATP-dependent pump, pulling dsDNA into and through the RuvAB complex. RuvB forms 2 homohexamers on either side of HJ DNA bound by 1 or 2 RuvA tetramers; 4 subunits per hexamer contact DNA at a time. Coordinated motions by a converter formed by DNA-disengaged RuvB subunits stimulates ATP hydrolysis and nucleotide exchange. Immobilization of the converter enables RuvB to convert the ATP-contained energy into a lever motion, pulling 2 nucleotides of DNA out of the RuvA tetramer per ATP hydrolyzed, thus driving DNA branch migration. The RuvB motors rotate together with the DNA substrate, which together with the progressing nucleotide cycle form the mechanistic basis for DNA recombination by continuous HJ branch migration. Branch migration allows RuvC to scan DNA until it finds its consensus sequence, where it cleaves and resolves cruciform DNA. The protein is Holliday junction branch migration complex subunit RuvB of Oenococcus oeni (strain ATCC BAA-331 / PSU-1).